Here is a 110-residue protein sequence, read N- to C-terminus: Protein NATD1 (110 aa).

The region spanning 19–109 is the N-acetyltransferase domain; the sequence is EHDRKRRQFT…PLPQYLEHLQ (91 aa).

This sequence belongs to the NATD1 family.

The polypeptide is Protein NATD1 (NATD1) (Gallus gallus (Chicken)).